The sequence spans 810 residues: DNA ligase (810 aa).

NAD(+)-binding positions include 46–50 (DAEYD), 95–96 (SL), and Glu-129. The active-site N6-AMP-lysine intermediate is Lys-131. 4 residues coordinate NAD(+): Arg-152, Glu-189, Lys-305, and Lys-329. Residues Cys-434, Cys-437, Cys-458, and Cys-464 each contribute to the Zn(2+) site. The disordered stretch occupies residues 528-548 (ERRAESGTAEPPKKAAKKKGD). Residues 731–810 (AAASTFAGKT…DDWLAMVAQG (80 aa)) form the BRCT domain.

Belongs to the NAD-dependent DNA ligase family. LigA subfamily. Requires Mg(2+) as cofactor. It depends on Mn(2+) as a cofactor.

The catalysed reaction is NAD(+) + (deoxyribonucleotide)n-3'-hydroxyl + 5'-phospho-(deoxyribonucleotide)m = (deoxyribonucleotide)n+m + AMP + beta-nicotinamide D-nucleotide.. Functionally, DNA ligase that catalyzes the formation of phosphodiester linkages between 5'-phosphoryl and 3'-hydroxyl groups in double-stranded DNA using NAD as a coenzyme and as the energy source for the reaction. It is essential for DNA replication and repair of damaged DNA. In Methylobacterium radiotolerans (strain ATCC 27329 / DSM 1819 / JCM 2831 / NBRC 15690 / NCIMB 10815 / 0-1), this protein is DNA ligase.